The chain runs to 178 residues: Cytidylate kinase 2 (178 aa).

7-15 (GKSGCGNTT) is an ATP binding site.

It belongs to the cytidylate kinase family. Type 2 subfamily.

The protein resides in the cytoplasm. The enzyme catalyses CMP + ATP = CDP + ADP. It catalyses the reaction dCMP + ATP = dCDP + ADP. This chain is Cytidylate kinase 2, found in Borrelia garinii subsp. bavariensis (strain ATCC BAA-2496 / DSM 23469 / PBi) (Borreliella bavariensis).